The sequence spans 425 residues: Serine--tRNA ligase (425 aa).

233-235 (TAE) contacts L-serine. An ATP-binding site is contributed by 264–266 (RAE). E287 is a binding site for L-serine. Position 351–354 (351–354 (EISS)) interacts with ATP. S387 contributes to the L-serine binding site.

Belongs to the class-II aminoacyl-tRNA synthetase family. Type-1 seryl-tRNA synthetase subfamily. As to quaternary structure, homodimer. The tRNA molecule binds across the dimer.

Its subcellular location is the cytoplasm. The catalysed reaction is tRNA(Ser) + L-serine + ATP = L-seryl-tRNA(Ser) + AMP + diphosphate + H(+). It carries out the reaction tRNA(Sec) + L-serine + ATP = L-seryl-tRNA(Sec) + AMP + diphosphate + H(+). It participates in aminoacyl-tRNA biosynthesis; selenocysteinyl-tRNA(Sec) biosynthesis; L-seryl-tRNA(Sec) from L-serine and tRNA(Sec): step 1/1. Catalyzes the attachment of serine to tRNA(Ser). Is also able to aminoacylate tRNA(Sec) with serine, to form the misacylated tRNA L-seryl-tRNA(Sec), which will be further converted into selenocysteinyl-tRNA(Sec). In Clostridium perfringens (strain SM101 / Type A), this protein is Serine--tRNA ligase.